Here is a 609-residue protein sequence, read N- to C-terminus: UvrABC system protein C (609 aa).

A GIY-YIG domain is found at 15 to 92 (TGSGVYQMQD…IKQFRPRYNV (78 aa)). The UVR domain maps to 202–237 (DQVIIKLTERMEVASENLVFEEAAHYRDQIRQLRRL).

This sequence belongs to the UvrC family. As to quaternary structure, interacts with UvrB in an incision complex.

The protein localises to the cytoplasm. Functionally, the UvrABC repair system catalyzes the recognition and processing of DNA lesions. UvrC both incises the 5' and 3' sides of the lesion. The N-terminal half is responsible for the 3' incision and the C-terminal half is responsible for the 5' incision. The chain is UvrABC system protein C from Coxiella burnetii (strain CbuG_Q212) (Coxiella burnetii (strain Q212)).